Consider the following 342-residue polypeptide: Oxygen-dependent coproporphyrinogen-III oxidase (342 aa).

Ser107 provides a ligand contact to substrate. Residues His111 and His121 each contribute to the a divalent metal cation site. Residue His121 is the Proton donor of the active site. A substrate-binding site is contributed by 123 to 125; sequence NYR. A divalent metal cation is bound by residues His155 and His185. Residues 277-312 form an important for dimerization region; sequence YVEFNLVYDRGTIFGLQTNGRTESILMSLPPLVRWE.

It belongs to the aerobic coproporphyrinogen-III oxidase family. In terms of assembly, homodimer. The cofactor is a divalent metal cation.

The protein localises to the cytoplasm. It catalyses the reaction coproporphyrinogen III + O2 + 2 H(+) = protoporphyrinogen IX + 2 CO2 + 2 H2O. The protein operates within porphyrin-containing compound metabolism; protoporphyrin-IX biosynthesis; protoporphyrinogen-IX from coproporphyrinogen-III (O2 route): step 1/1. Functionally, involved in the heme and chlorophyll biosynthesis. Catalyzes the aerobic oxidative decarboxylation of propionate groups of rings A and B of coproporphyrinogen-III to yield the vinyl groups in protoporphyrinogen-IX. The polypeptide is Oxygen-dependent coproporphyrinogen-III oxidase (Synechococcus sp. (strain ATCC 27144 / PCC 6301 / SAUG 1402/1) (Anacystis nidulans)).